We begin with the raw amino-acid sequence, 513 residues long: Nitrogenase molybdenum-iron protein beta chain (513 aa).

[8Fe-7S] cluster contacts are provided by Cys70, Cys95, and Cys153.

It belongs to the NifD/NifK/NifE/NifN family. Tetramer of two alpha and two beta chains. Forms complex with the iron protein (nitrogenase component 2). The cofactor is [8Fe-7S] cluster.

The enzyme catalyses N2 + 8 reduced [2Fe-2S]-[ferredoxin] + 16 ATP + 16 H2O = H2 + 8 oxidized [2Fe-2S]-[ferredoxin] + 2 NH4(+) + 16 ADP + 16 phosphate + 6 H(+). This molybdenum-iron protein is part of the nitrogenase complex that catalyzes the key enzymatic reactions in nitrogen fixation. The protein is Nitrogenase molybdenum-iron protein beta chain (nifK1) of Sinorhizobium fredii (strain NBRC 101917 / NGR234).